The following is a 58-amino-acid chain: Large ribosomal subunit protein uL30 (58 aa).

It belongs to the universal ribosomal protein uL30 family. As to quaternary structure, part of the 50S ribosomal subunit.

The sequence is that of Large ribosomal subunit protein uL30 from Desulfovibrio desulfuricans (strain ATCC 27774 / DSM 6949 / MB).